A 201-amino-acid polypeptide reads, in one-letter code: Potassium-transporting ATPase KdpC subunit (201 aa).

Residues 7–29 (PALVLLTALTAITGLAYPLAMTG) traverse the membrane as a helical segment.

The protein belongs to the KdpC family. As to quaternary structure, the system is composed of three essential subunits: KdpA, KdpB and KdpC.

Its subcellular location is the cell inner membrane. Part of the high-affinity ATP-driven potassium transport (or Kdp) system, which catalyzes the hydrolysis of ATP coupled with the electrogenic transport of potassium into the cytoplasm. This subunit acts as a catalytic chaperone that increases the ATP-binding affinity of the ATP-hydrolyzing subunit KdpB by the formation of a transient KdpB/KdpC/ATP ternary complex. In Methylobacterium radiotolerans (strain ATCC 27329 / DSM 1819 / JCM 2831 / NBRC 15690 / NCIMB 10815 / 0-1), this protein is Potassium-transporting ATPase KdpC subunit.